A 529-amino-acid polypeptide reads, in one-letter code: Glucose transporter 2A (529 aa).

A disordered region spans residues M1–A22. Over M1–Q43 the chain is Cytoplasmic. The helical transmembrane segment at V44–Y64 threads the bilayer. Residues E65 to S119 are Extracellular-facing. Residues L120–A140 traverse the membrane as a helical segment. Topologically, residues G141–S152 are cytoplasmic. The chain crosses the membrane as a helical span at residues F153–T173. At N174–E175 the chain is on the extracellular side. Residues F176–I196 form a helical membrane-spanning segment. At C197–G214 the chain is on the cytoplasmic side. The chain crosses the membrane as a helical span at residues V215–L235. Residues D236 to R250 are Extracellular-facing. A helical transmembrane segment spans residues F251–F271. Residues L272–Q300 lie on the Cytoplasmic side of the membrane. Residues M301–N321 traverse the membrane as a helical segment. The Extracellular portion of the chain corresponds to A322–S339. Residues L340–A360 traverse the membrane as a helical segment. Topologically, residues S361–M368 are cytoplasmic. A helical membrane pass occupies residues F369–F389. Residues P390–T404 lie on the Extracellular side of the membrane. The chain crosses the membrane as a helical span at residues G405 to A425. Topologically, residues Q426–S439 are cytoplasmic. Residues F440 to T460 traverse the membrane as a helical segment. The Extracellular portion of the chain corresponds to E461–A476. The helical transmembrane segment at V477–L497 threads the bilayer. The Cytoplasmic portion of the chain corresponds to Y498 to N529. Residues N508–N529 form a disordered region.

The protein belongs to the major facilitator superfamily. Sugar transporter (TC 2.A.1.1) family.

The protein localises to the membrane. Its function is as follows. Facilitative glucose transporter. This chain is Glucose transporter 2A (THT2A), found in Trypanosoma brucei brucei.